Consider the following 286-residue polypeptide: ATP synthase gamma chain (286 aa).

The protein belongs to the ATPase gamma chain family. As to quaternary structure, F-type ATPases have 2 components, CF(1) - the catalytic core - and CF(0) - the membrane proton channel. CF(1) has five subunits: alpha(3), beta(3), gamma(1), delta(1), epsilon(1). CF(0) has three main subunits: a, b and c.

The protein localises to the cell inner membrane. Functionally, produces ATP from ADP in the presence of a proton gradient across the membrane. The gamma chain is believed to be important in regulating ATPase activity and the flow of protons through the CF(0) complex. This is ATP synthase gamma chain from Alcanivorax borkumensis (strain ATCC 700651 / DSM 11573 / NCIMB 13689 / SK2).